The following is a 30-amino-acid chain: uncharacterized protein (30 aa).

A helical transmembrane segment spans residues 9-26; that stretch reads YRLVIIVLISVYYRYRFF.

It localises to the plastid. The protein resides in the chloroplast membrane. This is an uncharacterized protein from Marchantia polymorpha (Common liverwort).